We begin with the raw amino-acid sequence, 89 residues long: UPF0237 protein LMOf2365_0562 (89 aa).

The ACT domain occupies 4–78 (VLTVIGKDNV…EDLQVKIHIQ (75 aa)).

The protein belongs to the UPF0237 family.

This is UPF0237 protein LMOf2365_0562 from Listeria monocytogenes serotype 4b (strain F2365).